The following is a 278-amino-acid chain: Large ribosomal subunit protein uL2 (278 aa).

2 disordered regions span residues 1-58 (MGIR…GGGH) and 210-278 (GRMR…GKKR). Basic and acidic residues predominate over residues 23–33 (EVTRSEPEKSL). The segment covering 40 to 49 (SGGRNSTGRI) has biased composition (low complexity). 2 stretches are compositionally biased toward basic residues: residues 210–220 (GRMRWKGKRPS) and 269–278 (VRRRRTGKKR).

It belongs to the universal ribosomal protein uL2 family. In terms of assembly, part of the 50S ribosomal subunit. Forms a bridge to the 30S subunit in the 70S ribosome.

Functionally, one of the primary rRNA binding proteins. Required for association of the 30S and 50S subunits to form the 70S ribosome, for tRNA binding and peptide bond formation. It has been suggested to have peptidyltransferase activity; this is somewhat controversial. Makes several contacts with the 16S rRNA in the 70S ribosome. The chain is Large ribosomal subunit protein uL2 from Beutenbergia cavernae (strain ATCC BAA-8 / DSM 12333 / CCUG 43141 / JCM 11478 / NBRC 16432 / NCIMB 13614 / HKI 0122).